Here is a 133-residue protein sequence, read N- to C-terminus: Large ribosomal subunit protein bL17 (133 aa).

It belongs to the bacterial ribosomal protein bL17 family. Part of the 50S ribosomal subunit. Contacts protein L32.

This is Large ribosomal subunit protein bL17 from Thermodesulfovibrio yellowstonii (strain ATCC 51303 / DSM 11347 / YP87).